A 299-amino-acid chain; its full sequence is MLDKSRLRIAMQKSGRLSKESQQLLEQCGIKINLQQQRLLAFAENMPIDIMRVRDDDIPGLVMDDVVDLGIIGENVLEEELLTRRAQGEDPRYFTLRQLDFGGCRLSIALLLDTPWTGPECLRGKRIATSYPHLLKQYLDKLDITFKSCLLNGSVEVAPRAGLADAICDLVSTGATLEANGLREAEVIYRSKACLIQRDGELSVAKQSLVDKLLIRIQGVIQARESKYIMMHAPTERLDDIISLLTGAEQPTILPLAGDQHRVAMHMVSSETLFWETMENLKALGASSILVLPIEKMME.

Belongs to the ATP phosphoribosyltransferase family. Long subfamily. As to quaternary structure, equilibrium between an active dimeric form, an inactive hexameric form and higher aggregates. Interconversion between the various forms is largely reversible and is influenced by the natural substrates and inhibitors of the enzyme. Requires Mg(2+) as cofactor.

Its subcellular location is the cytoplasm. It carries out the reaction 1-(5-phospho-beta-D-ribosyl)-ATP + diphosphate = 5-phospho-alpha-D-ribose 1-diphosphate + ATP. The protein operates within amino-acid biosynthesis; L-histidine biosynthesis; L-histidine from 5-phospho-alpha-D-ribose 1-diphosphate: step 1/9. With respect to regulation, feedback inhibited by histidine. Its function is as follows. Catalyzes the condensation of ATP and 5-phosphoribose 1-diphosphate to form N'-(5'-phosphoribosyl)-ATP (PR-ATP). Has a crucial role in the pathway because the rate of histidine biosynthesis seems to be controlled primarily by regulation of HisG enzymatic activity. The polypeptide is ATP phosphoribosyltransferase (Sodalis glossinidius (strain morsitans)).